A 347-amino-acid chain; its full sequence is Putative [LysW]-L-2-aminoadipate/[LysW]-L-glutamate phosphate reductase (347 aa).

Ser9–Ile12 provides a ligand contact to NADP(+). Residue Cys149 is part of the active site. Asn314 contacts NADP(+).

This sequence belongs to the NAGSA dehydrogenase family. Type 1 subfamily. LysY sub-subfamily.

The protein localises to the cytoplasm. It carries out the reaction [amino-group carrier protein]-C-terminal-N-(1-carboxy-5-oxopentan-1-yl)-L-glutamine + phosphate + NADP(+) = [amino-group carrier protein]-C-terminal-N-(1-carboxy-5-phosphooxy-5-oxopentan-1-yl)-L-glutamine + NADPH + H(+). The catalysed reaction is [amino-group carrier protein]-C-terminal-gamma-(L-glutamyl-5-semialdehyde)-L-glutamate + phosphate + NADP(+) = [amino-group carrier protein]-C-terminal-gamma-(5-phospho-L-glutamyl)-L-glutamate + NADPH + H(+). The protein operates within amino-acid biosynthesis; L-lysine biosynthesis via AAA pathway; L-lysine from L-alpha-aminoadipate (Thermus route): step 3/5. Its pathway is amino-acid biosynthesis; L-arginine biosynthesis. Involved in both the arginine and lysine biosynthetic pathways. The protein is Putative [LysW]-L-2-aminoadipate/[LysW]-L-glutamate phosphate reductase of Picrophilus torridus (strain ATCC 700027 / DSM 9790 / JCM 10055 / NBRC 100828 / KAW 2/3).